Here is a 278-residue protein sequence, read N- to C-terminus: TnpB-like protein MJ0751 (278 aa).

Zn(2+)-binding residues include Cys-222, Cys-225, Cys-239, and Cys-242.

It in the N-terminal section; belongs to the transposase 2 family. This sequence in the C-terminal section; belongs to the transposase 35 family.

In Methanocaldococcus jannaschii (strain ATCC 43067 / DSM 2661 / JAL-1 / JCM 10045 / NBRC 100440) (Methanococcus jannaschii), this protein is TnpB-like protein MJ0751.